A 530-amino-acid chain; its full sequence is Ubiquitin carboxyl-terminal hydrolase 17-like protein 20 (530 aa).

A USP domain is found at 80 to 375; sequence AGLQNMGNTC…QAYVLFYIQK (296 aa). Cys-89 functions as the Nucleophile in the catalytic mechanism. The active-site Proton acceptor is His-334. Basic and acidic residues-rich tracts occupy residues 382-392 and 398-413; these read SESVSRGREPR and DTDRRATQGELKRDHP. Disordered stretches follow at residues 382–413 and 509–530; these read SESVSRGREPRALGAEDTDRRATQGELKRDHP and RGRARRSKGKNKHSKRALLVCQ. A compositionally biased stretch (basic residues) spans 510-524; it reads GRARRSKGKNKHSKR.

The protein belongs to the peptidase C19 family. USP17 subfamily.

Its subcellular location is the nucleus. The protein resides in the endoplasmic reticulum. The enzyme catalyses Thiol-dependent hydrolysis of ester, thioester, amide, peptide and isopeptide bonds formed by the C-terminal Gly of ubiquitin (a 76-residue protein attached to proteins as an intracellular targeting signal).. Its function is as follows. Deubiquitinating enzyme that removes conjugated ubiquitin from specific proteins to regulate different cellular processes that may include cell proliferation, progression through the cell cycle, apoptosis, cell migration, and the cellular response to viral infection. The protein is Ubiquitin carboxyl-terminal hydrolase 17-like protein 20 (USP17L20) of Homo sapiens (Human).